The following is a 149-amino-acid chain: Deoxyuridine 5'-triphosphate nucleotidohydrolase (149 aa).

Substrate contacts are provided by residues 68–70 (RSG), Asn81, 85–87 (LID), and Met95.

Belongs to the dUTPase family. Mg(2+) serves as cofactor.

It catalyses the reaction dUTP + H2O = dUMP + diphosphate + H(+). Its pathway is pyrimidine metabolism; dUMP biosynthesis; dUMP from dCTP (dUTP route): step 2/2. This enzyme is involved in nucleotide metabolism: it produces dUMP, the immediate precursor of thymidine nucleotides and it decreases the intracellular concentration of dUTP so that uracil cannot be incorporated into DNA. This chain is Deoxyuridine 5'-triphosphate nucleotidohydrolase, found in Bordetella bronchiseptica (strain ATCC BAA-588 / NCTC 13252 / RB50) (Alcaligenes bronchisepticus).